A 274-amino-acid chain; its full sequence is Nickel/cobalt efflux system RcnA (274 aa).

Residues 1 to 12 (MTEFTTLLQQGN) lie on the Periplasmic side of the membrane. The chain crosses the membrane as a helical span at residues 13 to 33 (AWFFIPSAILLGALHGLEPGH). Residues 34-56 (SKTMMAAFIIAIKGTIKQAVMLG) are Cytoplasmic-facing. The chain crosses the membrane as a helical span at residues 57 to 77 (LAATISHTAVVWLIAFGGMVI). Over 78–86 (SKRFTAQSA) the chain is Periplasmic. A helical transmembrane segment spans residues 87–107 (EPWLQLISAVIIISTAFWMFW). At 108–174 (RTWRGERNWL…FDGREVTNWQ (67 aa)) the chain is on the cytoplasmic side. Over residues 127–137 (HHHHDHEDHHD) the composition is skewed to basic and acidic residues. Residues 127-153 (HHHHDHEDHHDHGHHHHHEHGEYQDAH) form a disordered region. Residues 175-195 (ILLFGLTGGLIPCPAAITVLL) form a helical membrane-spanning segment. The Periplasmic portion of the chain corresponds to 196 to 209 (ICIQLKALTLGATL). Residues 210–230 (VVSFSLGLALTLVTVSVGAAI) form a helical membrane-spanning segment. The Cytoplasmic portion of the chain corresponds to 231 to 251 (SVQQVAKRWSGFNTLAKRAPY). The helical transmembrane segment at 252–272 (FSSLLIGLVGVYMGVHGFMGI) threads the bilayer. Over 273 to 274 (MR) the chain is Periplasmic.

This sequence belongs to the NiCoT transporter (TC 2.A.52) family. RcnA subfamily.

The protein resides in the cell inner membrane. Functionally, efflux system for nickel and cobalt. The protein is Nickel/cobalt efflux system RcnA (rcnA) of Escherichia coli O6:K15:H31 (strain 536 / UPEC).